A 371-amino-acid polypeptide reads, in one-letter code: O-phospho-L-seryl-tRNA:Cys-tRNA synthase 1 (371 aa).

Pyridoxal 5'-phosphate-binding positions include 78 to 79 (AR), asparagine 183, and 206 to 208 (SGH). An N6-(pyridoxal phosphate)lysine modification is found at lysine 209.

It belongs to the SepCysS family. As to quaternary structure, homodimer. Probably interacts with SepRS. Pyridoxal 5'-phosphate is required as a cofactor.

The catalysed reaction is O-phospho-L-seryl-tRNA(Cys) + hydrogen sulfide + H(+) = L-cysteinyl-tRNA(Cys) + phosphate. Functionally, converts O-phospho-L-seryl-tRNA(Cys) (Sep-tRNA(Cys)) to L-cysteinyl-tRNA(Cys) (Cys-tRNA(Cys)). This chain is O-phospho-L-seryl-tRNA:Cys-tRNA synthase 1, found in Archaeoglobus fulgidus (strain ATCC 49558 / DSM 4304 / JCM 9628 / NBRC 100126 / VC-16).